The following is a 324-amino-acid chain: Zinc metalloproteinase leucurolysin-B (324 aa).

The Peptidase M12B domain occupies 1 to 119; the sequence is DTVLLNRISH…LNPQCILNEP (119 aa). D11 contributes to the Ca(2+) binding site. Intrachain disulfides connect C34-C114, C74-C98, and C76-C81. H59 contacts Zn(2+). E60 is a catalytic residue. Residues H63 and H69 each contribute to the Zn(2+) site. N97 carries N-linked (GlcNAc...) asparagine glycosylation. Ca(2+) is bound by residues C114, N117, V129, N132, L134, E136, E139, and D142. Positions 127–213 constitute a Disintegrin domain; it reads PPVCGNELLE…QCPTDDFKRN (87 aa). Intrachain disulfides connect C130-C159, C141-C154, C143-C149, C153-C176, C167-C173, C172-C198, C185-C205, C192-C224, C217-C229, C236-C286, C251-C295, C264-C274, and C281-C315. The D/ECD-tripeptide signature appears at 191-193; that stretch reads ECD. N296 and N305 each carry an N-linked (GlcNAc...) asparagine glycan.

It belongs to the venom metalloproteinase (M12B) family. P-III subfamily. P-IIIa sub-subfamily. In terms of assembly, monomer. Zn(2+) is required as a cofactor. Post-translationally, N-glycosylated. The N-terminus is blocked. Expressed by the venom gland.

The protein localises to the secreted. With respect to regulation, inhibited by EDTA, but not by PMSF. Pre-incubation with 2 mM DTT completely abolishes activity. Functionally, snake venom zinc metalloproteinase that acts as a potent hemorrhagic toxin. Hydrolyzes the insulin B chain at the 14-Ala-|-Leu-15 bond but not the 16-Tyr-|-Leu-17 bond. Degrades the alpha-chain of fibrin and hydrolyzes the Aalpha-chain of fibrinogen (FGA) while leaving the beta and gamma chains unaffected. Degrades type-I collagen and its gelatin. Degrades the alpha-1 chain of type-IV collagen and its gelatin but not the alpha-2 chain. Degrades plasma fibronectin, plasma vitronectin and basement membrane enactin. It inhibits collagen-induced platelet aggregation. The polypeptide is Zinc metalloproteinase leucurolysin-B (Bothrops leucurus (Whitetail lancehead)).